A 73-amino-acid chain; its full sequence is UPF0435 protein Lm4b_01721 (73 aa).

It belongs to the UPF0435 family.

The chain is UPF0435 protein Lm4b_01721 from Listeria monocytogenes serotype 4b (strain CLIP80459).